The chain runs to 364 residues: Tubulin alpha-2 chain (364 aa).

5 residues coordinate GTP: Gly59, Thr60, Thr94, Asn121, and Asn144. Glu170 is a catalytic residue.

The protein belongs to the tubulin family. As to quaternary structure, dimer of alpha and beta chains. A typical microtubule is a hollow water-filled tube with an outer diameter of 25 nm and an inner diameter of 15 nM. Alpha-beta heterodimers associate head-to-tail to form protofilaments running lengthwise along the microtubule wall with the beta-tubulin subunit facing the microtubule plus end conferring a structural polarity. Microtubules usually have 13 protofilaments but different protofilament numbers can be found in some organisms and specialized cells. Mg(2+) is required as a cofactor. Undergoes a tyrosination/detyrosination cycle, the cyclic removal and re-addition of a C-terminal tyrosine residue by the enzymes tubulin tyrosine carboxypeptidase (TTCP) and tubulin tyrosine ligase (TTL), respectively.

It is found in the cytoplasm. The protein localises to the cytoskeleton. It catalyses the reaction GTP + H2O = GDP + phosphate + H(+). Its function is as follows. Tubulin is the major constituent of microtubules, a cylinder consisting of laterally associated linear protofilaments composed of alpha- and beta-tubulin heterodimers. Microtubules grow by the addition of GTP-tubulin dimers to the microtubule end, where a stabilizing cap forms. Below the cap, tubulin dimers are in GDP-bound state, owing to GTPase activity of alpha-tubulin. This is Tubulin alpha-2 chain (TUBA2) from Anemia phyllitidis (Fern).